The following is a 193-amino-acid chain: Guanylate kinase (193 aa).

The region spanning 8-188 (GRLVVLVGPS…ACEQLVSLFV (181 aa)) is the Guanylate kinase-like domain. ATP is bound at residue 15–22 (GPSAVGKS).

It belongs to the guanylate kinase family.

The protein localises to the cytoplasm. The catalysed reaction is GMP + ATP = GDP + ADP. Its function is as follows. Essential for recycling GMP and indirectly, cGMP. The polypeptide is Guanylate kinase (Nocardia farcinica (strain IFM 10152)).